A 143-amino-acid polypeptide reads, in one-letter code: MSRLACISSLFILCAIGSEAVFTQSAGVKGVLMCGDKPLANTKVKLYDDDTGPDLDDLLAEGTTDSLGQFLLTGHTSEVMTIDPKLNIYHDCDDGLKPCQRRVTFNIPKSFVSSGENPKTFFNIGTINMQIEFESESRDCLHR.

The first 20 residues, 1–20 (MSRLACISSLFILCAIGSEA), serve as a signal peptide directing secretion.

It belongs to the nematode transthyretin-like family. Expressed in head cells next to and anterior of the first pharyngeal bulb, the pharynx, and the hypodermis.

It is found in the secreted. Functionally, protects dopaminergic neurons from degeneration caused by oxidative stress. The polypeptide is Transthyretin-like protein 33 (Caenorhabditis elegans).